The primary structure comprises 459 residues: Smoothelin-like protein 1 (459 aa).

Residues 1-27 are compositionally biased toward polar residues; the sequence is MEQTEGNSSEDGTTVSPTAGNLETPGS. The segment at 1-314 is disordered; that stretch reads MEQTEGNSSE…RPRGPRAQNR (314 aa). Basic and acidic residues-rich tracts occupy residues 42–55, 75–105, 112–168, 185–211, and 221–232; these read SDKE…EHLC, DELK…KEDT, DTGK…KEDA, ADVK…KELV, and EQGKENESEERA. Positions 124 to 154 form a coiled coil; sequence NEVREKEEAMLASEKQKVDEKETNLESKEKS. Residues 260 to 283 show a composition bias toward low complexity; sequence PESTGETSPSASESSPSEVPGSPT. The segment covering 287-300 has biased composition (basic and acidic residues); that stretch reads PSEKKKDRAPERRV. The residue at position 301 (serine 301) is a Phosphoserine; by PKA and PKG. The region spanning 343–449 is the Calponin-homology (CH) domain; sequence GGVKNMLLEW…YIQELYRSLV (107 aa). The segment at 441–459 is calmodulin-binding; it reads IQELYRSLVQKGLVKTKKK.

Belongs to the smoothelin family. In terms of assembly, interacts with PPP1R12A. In terms of processing, maximal phosphorylation of Ser-301 correlates with maximal relaxation of aorta in response to acetylcholine. As to expression, widely expressed, with highest expression in skeletal muscles (at protein level). Within striated muscles, significantly more expressed in soleus muscle compared with plantaris muscle or white vastus (at protein level). 30-40% lower expression in females than in males (at protein level). Expressed in type 2a fibers, but not detected in fast twitch type 2b muscle white vastus nor in oxidative type I/b heart muscle (at protein level). Expressed within myometrial cells of the uterus, as well as in the endometrial layer. In the aorta, confined to smooth muscle cells. Not detected in endothelial cells.

Its subcellular location is the cytoplasm. The protein resides in the myofibril. The protein localises to the sarcomere. It is found in the i band. It localises to the m line. Its subcellular location is the nucleus. Functionally, plays a role in the regulation of contractile properties of both striated and smooth muscles. When unphosphorylated, may inhibit myosin dephosphorylation. Phosphorylation at Ser-301 reduces this inhibitory activity. This chain is Smoothelin-like protein 1 (Smtnl1), found in Mus musculus (Mouse).